Consider the following 87-residue polypeptide: U-scoloptoxin(23)-Er1a (87 aa).

The signal sequence occupies residues 1 to 29; it reads MSLIVVRTHSFLFVLVLLLFASVFHSVDS. The tract at residues 32-54 is disordered; the sequence is FNPNGRYGRRDSASALSDASENK.

The protein belongs to the scoloptoxin-23 family. Expressed by the venom gland.

The protein resides in the secreted. This is U-scoloptoxin(23)-Er1a from Ethmostigmus rubripes (Giant centipede).